A 362-amino-acid polypeptide reads, in one-letter code: 5'-tyrosyl-DNA phosphodiesterase (362 aa).

The span at 1-10 (MSNSDDEIQE) shows a compositional bias: acidic residues. A disordered region spans residues 1–43 (MSNSDDEIQEIEAKRQKMSQEDSEVEIEILDEPEQGKLKNSSM). Basic and acidic residues predominate over residues 11–20 (IEAKRQKMSQ). A compositionally biased stretch (acidic residues) spans 21–33 (EDSEVEIEILDEP). The tract at residues 126 to 130 (NIDGL) is interaction with 5' end of substrate DNA. Asp128 and Glu158 together coordinate Mg(2+). The tract at residues 232–237 (HLESTR) is interaction with 5' end of substrate DNA. The active-site Proton donor/acceptor is Asp271. Residues 273-275 (NLR) are interaction with 5' end of substrate DNA.

This sequence belongs to the CCR4/nocturin family. TTRAP/TDP2 subfamily. In terms of assembly, interacts with mxl-1; the interaction promotes axon regeneration after injury. Interacts with ets-4; the interaction is required for the sumoylation of ets-4. Requires Mg(2+) as cofactor. Mn(2+) serves as cofactor.

It localises to the nucleus. Its subcellular location is the PML body. Functionally, DNA repair enzyme that can remove a variety of covalent adducts from DNA through hydrolysis of a 5'-phosphodiester bond, giving rise to DNA with a free 5' phosphate. Catalyzes the hydrolysis of dead-end complexes between DNA and the topoisomerase 2 (top2) active site tyrosine residue. Hydrolyzes 5'-phosphoglycolates on protruding 5' ends on DNA double-strand breaks (DSBs) due to DNA damage by radiation and free radicals. Inhibits axon regeneration after neuronal injury by promoting the sumoylation of ets-4, thereby inhibiting the phosphorylation of ets-4 required for probable interaction with cebp-1 and activation of svh-2 expression. This is 5'-tyrosyl-DNA phosphodiesterase from Caenorhabditis elegans.